The sequence spans 201 residues: Recombination protein RecR (201 aa).

The C4-type zinc finger occupies 57-72 (CADCRTFTEQEKCNIC). Residues 81–176 (GQICVVESPA…DASRIAHGVP (96 aa)) enclose the Toprim domain.

Belongs to the RecR family.

May play a role in DNA repair. It seems to be involved in an RecBC-independent recombinational process of DNA repair. It may act with RecF and RecO. This Cronobacter sakazakii (strain ATCC BAA-894) (Enterobacter sakazakii) protein is Recombination protein RecR.